The following is a 729-amino-acid chain: Glycine--tRNA ligase, mitochondrial 1 (729 aa).

Methionine 1 is subject to N-acetylmethionine. The transit peptide at 1 to 28 directs the protein to the mitochondrion; the sequence is MRIFSTFVFHRRQQIFNLRQFQTTTILR. The WHEP-TRS domain maps to 50–106; it reads SLSEKSSSVEAQGNAVRALKASRAAKPEIDAAIEQLNKLKLEKSTVEKELQSIISSS. A glycine-binding site is contributed by glutamate 296. Residues 328 to 330 and 339 to 340 contribute to the ATP site; these read RNE and RV. Glutamate 347 is a binding site for glycine. Residue 454–455 participates in ATP binding; it reads EC. A glycine-binding site is contributed by 575 to 577; the sequence is EPS. Residue arginine 582 participates in ATP binding.

The protein belongs to the class-II aminoacyl-tRNA synthetase family. Homodimer.

It is found in the mitochondrion. The protein resides in the cytoplasm. It localises to the cytosol. It carries out the reaction tRNA(Gly) + glycine + ATP = glycyl-tRNA(Gly) + AMP + diphosphate. The enzyme catalyses 2 ATP + H(+) = P(1),P(4)-bis(5'-adenosyl) tetraphosphate + diphosphate. Its function is as follows. Catalyzes the ATP-dependent ligation of glycine to the 3'-end of its cognate tRNA, via the formation of an aminoacyl-adenylate intermediate (Gly-AMP). Also produces diadenosine tetraphosphate (Ap4A), a universal pleiotropic signaling molecule needed for cell regulation pathways, by direct condensation of 2 ATPs. Thereby, may play a special role in Ap4A homeostasis. This is Glycine--tRNA ligase, mitochondrial 1 from Arabidopsis thaliana (Mouse-ear cress).